The primary structure comprises 741 residues: G2 and S phase-expressed protein 1 (741 aa).

A Phosphoserine modification is found at Ser73. Disordered regions lie at residues 101 to 120 (EVAQ…ETFV), 131 to 428 (EKEQ…KTVS), and 450 to 512 (FKVP…STRR). Residues 106–120 (ATPQNPVNQGKETFV) are compositionally biased toward polar residues. Basic and acidic residues predominate over residues 131–147 (EKEQKRDRSPMSLKRET). Residues Ser139, Ser153, Ser191, and Ser245 each carry the phosphoserine modification. Over residues 173 to 209 (SPVSAGPAQTQSNQGLPCSSQPLPRESSTSQPPSQAG) the composition is skewed to polar residues. Residues 246–261 (IQRTKLVNEKGSQSDV) show a composition bias toward polar residues. The segment covering 310-321 (SSTSGSASSLES) has biased composition (low complexity). Ser311 is subject to Phosphoserine. Over residues 337 to 355 (QRSSIPASGSQRRTSTSKS) the composition is skewed to polar residues. Residues 360–372 (PAASRQALPAAPA) show a composition bias toward low complexity. The span at 398–408 (SPLTQQPQTPE) shows a compositional bias: polar residues. The residue at position 460 (Ser460) is a Phosphoserine. Thr465 carries the post-translational modification Phosphothreonine. Phosphoserine is present on residues Ser476, Ser493, Ser509, and Ser514. Residues 478–497 (TPASRVVSSTPVRRSSGTTP) are compositionally biased toward low complexity. Thr518 is subject to Phosphothreonine. A phosphoserine mark is found at Ser521, Ser541, Ser582, and Ser599. The tract at residues 550 to 640 (LSSEPRRRST…VHGGGCSHTP (91 aa)) is disordered. The span at 578 to 593 (QGLSSDESSSPPSSVP) shows a compositional bias: low complexity. Thr696 carries the phosphothreonine modification. Residues Ser720, Ser726, and Ser736 each carry the phosphoserine modification.

Post-translationally, phosphorylated in mitosis.

It is found in the cytoplasm. The protein localises to the cytoskeleton. Its function is as follows. May be involved in p53-induced cell cycle arrest in G2/M phase by interfering with microtubule rearrangements that are required to enter mitosis. Overexpression delays G2/M phase progression. In Mus musculus (Mouse), this protein is G2 and S phase-expressed protein 1 (Gtse1).